Here is a 333-residue protein sequence, read N- to C-terminus: Holliday junction branch migration complex subunit RuvB (333 aa).

Residues 1–182 (MEERLVSGDV…FGVISRLEYY (182 aa)) form a large ATPase domain (RuvB-L) region. ATP contacts are provided by residues Leu-21, Arg-22, Gly-63, Lys-66, Thr-67, Thr-68, 129 to 131 (EDY), Arg-172, Tyr-182, and Arg-219. Thr-67 contacts Mg(2+). Residues 183-253 (TTEHLTQIVM…LAKEALELLQ (71 aa)) are small ATPAse domain (RuvB-S). The segment at 256–333 (RLGLDHIDHK…EHFGMEVPKQ (78 aa)) is head domain (RuvB-H). DNA-binding residues include Arg-311 and Arg-316.

It belongs to the RuvB family. As to quaternary structure, homohexamer. Forms an RuvA(8)-RuvB(12)-Holliday junction (HJ) complex. HJ DNA is sandwiched between 2 RuvA tetramers; dsDNA enters through RuvA and exits via RuvB. An RuvB hexamer assembles on each DNA strand where it exits the tetramer. Each RuvB hexamer is contacted by two RuvA subunits (via domain III) on 2 adjacent RuvB subunits; this complex drives branch migration. In the full resolvosome a probable DNA-RuvA(4)-RuvB(12)-RuvC(2) complex forms which resolves the HJ.

The protein localises to the cytoplasm. It catalyses the reaction ATP + H2O = ADP + phosphate + H(+). Functionally, the RuvA-RuvB-RuvC complex processes Holliday junction (HJ) DNA during genetic recombination and DNA repair, while the RuvA-RuvB complex plays an important role in the rescue of blocked DNA replication forks via replication fork reversal (RFR). RuvA specifically binds to HJ cruciform DNA, conferring on it an open structure. The RuvB hexamer acts as an ATP-dependent pump, pulling dsDNA into and through the RuvAB complex. RuvB forms 2 homohexamers on either side of HJ DNA bound by 1 or 2 RuvA tetramers; 4 subunits per hexamer contact DNA at a time. Coordinated motions by a converter formed by DNA-disengaged RuvB subunits stimulates ATP hydrolysis and nucleotide exchange. Immobilization of the converter enables RuvB to convert the ATP-contained energy into a lever motion, pulling 2 nucleotides of DNA out of the RuvA tetramer per ATP hydrolyzed, thus driving DNA branch migration. The RuvB motors rotate together with the DNA substrate, which together with the progressing nucleotide cycle form the mechanistic basis for DNA recombination by continuous HJ branch migration. Branch migration allows RuvC to scan DNA until it finds its consensus sequence, where it cleaves and resolves cruciform DNA. The sequence is that of Holliday junction branch migration complex subunit RuvB from Geobacillus sp. (strain WCH70).